The chain runs to 238 residues: Probable transcriptional regulatory protein VIBHAR_07036 (238 aa).

It belongs to the TACO1 family.

It localises to the cytoplasm. This Vibrio campbellii (strain ATCC BAA-1116) protein is Probable transcriptional regulatory protein VIBHAR_07036.